The primary structure comprises 326 residues: Neuferricin homolog (326 aa).

An N-terminal signal peptide occupies residues 1 to 34 (MDKNRRRTDDAGLMTKTLAGIAALVFFLSFICSS). One can recognise a Cytochrome b5 heme-binding domain in the interval 98–197 (KHVFTPEQLH…KEYPLVGVVA (100 aa)).

Belongs to the cytochrome b5 family. MAPR subfamily.

It localises to the secreted. Functionally, heme-binding protein. This Caenorhabditis elegans protein is Neuferricin homolog (tag-131).